Reading from the N-terminus, the 585-residue chain is T-cell surface protein tactile (585 aa).

The signal sequence occupies residues 1–21; it reads MEKKWKYCAVYYIIQIHFVKG. Topologically, residues 22–519 are extracellular; sequence VWEKTVNTEE…IVVNKPKDGM (498 aa). The 88-residue stretch at 38–125 folds into the Ig-like V-type 1 domain; sequence GSDVNLTCQT…YECMLVLYPE (88 aa). N-linked (GlcNAc...) asparagine glycosylation is found at asparagine 42, asparagine 97, asparagine 107, asparagine 148, asparagine 156, asparagine 166, asparagine 200, asparagine 215, asparagine 277, asparagine 278, asparagine 300, asparagine 350, and asparagine 368. Cysteines 45 and 118 form a disulfide. An Ig-like V-type 2 domain is found at 156–238; the sequence is NQTLEIPCFQ…YRLHLSPVQI (83 aa). Cysteine 163 and cysteine 247 form a disulfide bridge. One can recognise an Ig-like C2-type domain in the interval 269-375; sequence PEIPVIVENN…VWNISSEKIT (107 aa). A disulfide bridge links cysteine 290 with cysteine 355. 3 stretches are compositionally biased toward polar residues: residues 385–418, 426–452, and 460–475; these read TDPP…SSVT, RPNT…SSGT, and RIPS…GAGS. The segment at 385–475 is disordered; it reads TDPPLSVTES…YSSSPSGAGS (91 aa). The N-linked (GlcNAc...) asparagine glycan is linked to asparagine 435. Asparagine 497 is a glycosylation site (N-linked (GlcNAc...) asparagine). The chain crosses the membrane as a helical span at residues 520 to 540; sequence SWPVIVAALLFCCMILFGLGV. Residues 541 to 585 are Cytoplasmic-facing; sequence RKWCQYQKEIMERPPPFKPPPPPIKYTCIQEPNESDLPYHEMETL.

In terms of assembly, homodimer; disulfide-linked. Interacts with PVR. As to expression, expressed on normal T-cell lines and clones, and some transformed T-cells, but no other cultured cell lines tested. It is expressed at very low levels on activated B-cells.

Its subcellular location is the membrane. Its function is as follows. May be involved in adhesive interactions of activated T and NK cells during the late phase of the immune response. Promotes NK cell-target adhesion by interacting with PVR present on target cells. May function at a time after T and NK cells have penetrated the endothelium using integrins and selectins, when they are actively engaging diseased cells and moving within areas of inflammation. This is T-cell surface protein tactile (CD96) from Homo sapiens (Human).